Reading from the N-terminus, the 75-residue chain is Carwaprin-a (75 aa).

The first 24 residues, 1 to 24, serve as a signal peptide directing secretion; it reads MSSGGLLLLLGLLTLWAELTPISG. Residues 27 to 72 enclose the WAP domain; that stretch reads RPKKPGLCPPRPQKPPCVRECKNDWRCPGEQKCCRYGCIYECRDPI. 4 cysteine pairs are disulfide-bonded: C34-C60, C43-C64, C47-C59, and C53-C68.

This sequence belongs to the venom waprin family. As to expression, expressed by the venom gland.

The protein resides in the secreted. Its function is as follows. Damages membranes of susceptible bacteria. Has no hemolytic activity. Not toxic to mice. Does not inhibit the proteinases elastase and cathepsin G. The sequence is that of Carwaprin-a from Tropidechis carinatus (Australian rough-scaled snake).